A 244-amino-acid polypeptide reads, in one-letter code: 7-cyano-7-deazaguanine synthase (244 aa).

Position 14–24 (14–24 (FSGGQDSATCV)) interacts with ATP. Positions 202, 217, 220, and 223 each coordinate Zn(2+).

This sequence belongs to the QueC family. Zn(2+) is required as a cofactor.

It catalyses the reaction 7-carboxy-7-deazaguanine + NH4(+) + ATP = 7-cyano-7-deazaguanine + ADP + phosphate + H2O + H(+). It functions in the pathway purine metabolism; 7-cyano-7-deazaguanine biosynthesis. Catalyzes the ATP-dependent conversion of 7-carboxy-7-deazaguanine (CDG) to 7-cyano-7-deazaguanine (preQ(0)). The protein is 7-cyano-7-deazaguanine synthase of Burkholderia lata (strain ATCC 17760 / DSM 23089 / LMG 22485 / NCIMB 9086 / R18194 / 383).